The following is a 249-amino-acid chain: 5'-nucleotidase SurE (249 aa).

A divalent metal cation-binding residues include Asp8, Asp9, Ser39, and Asn91.

This sequence belongs to the SurE nucleotidase family. The cofactor is a divalent metal cation.

It localises to the cytoplasm. The catalysed reaction is a ribonucleoside 5'-phosphate + H2O = a ribonucleoside + phosphate. Functionally, nucleotidase that shows phosphatase activity on nucleoside 5'-monophosphates. The sequence is that of 5'-nucleotidase SurE from Pseudomonas putida (strain ATCC 47054 / DSM 6125 / CFBP 8728 / NCIMB 11950 / KT2440).